The chain runs to 405 residues: Fragilysin (405 aa).

The N-terminal stretch at 1-25 (MFILNFNKMKNVKLLLMLGTAALLA) is a signal peptide. Zn(2+) is bound at residue His356. Glu357 is an active-site residue. Residues His360 and His366 each coordinate Zn(2+).

Belongs to the peptidase M10C family. Zn(2+) is required as a cofactor.

It localises to the secreted. The catalysed reaction is Broad proteolytic specificity, bonds hydrolyzed includes -Gly-|-Leu-, -Met-|-Leu-, -Phe-|-Leu-, -Cys-|-Leu-, -Leu-|-Gly-.. Its function is as follows. Diarrheal toxin that hydrolyzes gelatin, azocoll, actin, tropomyosin, and fibrinogen. This chain is Fragilysin (btfP), found in Bacteroides fragilis.